A 27-amino-acid chain; its full sequence is Caerulein precursor fragment R1 (27 aa).

As to expression, expressed by the skin glands.

The protein localises to the secreted. Antimicrobial peptide. This is Caerulein precursor fragment R1 from Xenopus ruwenzoriensis (Uganda clawed frog).